The sequence spans 65 residues: Large ribosomal subunit protein bL35 (65 aa).

This sequence belongs to the bacterial ribosomal protein bL35 family.

The chain is Large ribosomal subunit protein bL35 from Acetivibrio thermocellus (strain ATCC 27405 / DSM 1237 / JCM 9322 / NBRC 103400 / NCIMB 10682 / NRRL B-4536 / VPI 7372) (Clostridium thermocellum).